Reading from the N-terminus, the 431-residue chain is Histidinol dehydrogenase (431 aa).

The NAD(+) site is built by Tyr-127, Gln-185, and Asn-208. Residues Ser-234, Gln-256, and His-259 each coordinate substrate. 2 residues coordinate Zn(2+): Gln-256 and His-259. Catalysis depends on proton acceptor residues Glu-323 and His-324. Positions 324, 357, 411, and 416 each coordinate substrate. Asp-357 serves as a coordination point for Zn(2+). A Zn(2+)-binding site is contributed by His-416.

It belongs to the histidinol dehydrogenase family. It depends on Zn(2+) as a cofactor.

It carries out the reaction L-histidinol + 2 NAD(+) + H2O = L-histidine + 2 NADH + 3 H(+). The protein operates within amino-acid biosynthesis; L-histidine biosynthesis; L-histidine from 5-phospho-alpha-D-ribose 1-diphosphate: step 9/9. Its function is as follows. Catalyzes the sequential NAD-dependent oxidations of L-histidinol to L-histidinaldehyde and then to L-histidine. The protein is Histidinol dehydrogenase of Vibrio cholerae serotype O1 (strain ATCC 39315 / El Tor Inaba N16961).